The following is a 184-amino-acid chain: MLKKMGEAVARVARKVNETVESGSDTLDLAECKLVSFPIGIYKVLRNVSGQIHLITLANNELKSLTSKFMTTFSQLRELHLEGNFLHRLPSEVSALQHLKAIDLSRNQFQDFPEQLTALPALETINLEENEIVDVPVEKLAAMPALRSINLRFNPLNAEVRVIAPPLIKFDMLMSPEGARAPLP.

LRR repeat units lie at residues 51–72 (QIHL…FMTT), 75–96 (QLRE…VSAL), 98–120 (HLKA…TALP), 121–141 (ALET…EKLA), and 145–167 (ALRS…APPL). Ser175 is modified (phosphoserine).

This Homo sapiens (Human) protein is Leucine-rich repeat-containing protein 20 (LRRC20).